A 249-amino-acid chain; its full sequence is Probable transcriptional regulatory protein LBJ_0543 (249 aa).

It belongs to the TACO1 family.

It localises to the cytoplasm. The chain is Probable transcriptional regulatory protein LBJ_0543 from Leptospira borgpetersenii serovar Hardjo-bovis (strain JB197).